The chain runs to 122 residues: Non-specific lipid-transfer protein (122 aa).

Residues 1–19 (MGVSRACFVVMVVVYMVVA) form the signal peptide. Residues 20–29 (ATPNVKLAEA) constitute a propeptide that is removed on maturation. Disulfide bonds link Cys32-Cys81, Cys42-Cys58, Cys59-Cys104, and Cys79-Cys118.

In terms of assembly, monomer.

Functionally, plant non-specific lipid-transfer proteins transfer phospholipids as well as galactolipids across membranes. May play a role in wax or cutin deposition in the cell walls of expanding epidermal cells and certain secretory tissues. Binds saturated fatty acids, unsaturated fatty acids, lysolipids and, with highest efficiency, jasmonic acid. Has weak antimicrobial activity against fungi. Inhibits spore germination and hyphae elongation in A.niger VKM F-2259 and N.crassa VKM F-184. Has no antibacterial activity against A.tumefaciens A281, C.michiganensis VKM Ac-144 and P.syringae VKM B-1546. This is Non-specific lipid-transfer protein from Anethum graveolens (Dill).